Here is a 184-residue protein sequence, read N- to C-terminus: Photosystem I assembly protein Ycf4 (184 aa).

Helical transmembrane passes span 22 to 42 (FCWAFILFLGSLGFLLVGTSS) and 57 to 77 (IIFFPQGIVMSFYGIAGLFIS).

The protein belongs to the Ycf4 family.

The protein resides in the plastid. It localises to the chloroplast thylakoid membrane. In terms of biological role, seems to be required for the assembly of the photosystem I complex. This is Photosystem I assembly protein Ycf4 from Draba nemorosa (Woodland whitlowgrass).